The primary structure comprises 487 residues: UDP-N-acetylmuramate--L-alanine ligase (487 aa).

Residue 129–135 (GTHGKTT) participates in ATP binding.

The protein belongs to the MurCDEF family.

It is found in the cytoplasm. The enzyme catalyses UDP-N-acetyl-alpha-D-muramate + L-alanine + ATP = UDP-N-acetyl-alpha-D-muramoyl-L-alanine + ADP + phosphate + H(+). Its pathway is cell wall biogenesis; peptidoglycan biosynthesis. In terms of biological role, cell wall formation. This Aliivibrio fischeri (strain ATCC 700601 / ES114) (Vibrio fischeri) protein is UDP-N-acetylmuramate--L-alanine ligase.